We begin with the raw amino-acid sequence, 473 residues long: Ribulose bisphosphate carboxylase large chain (473 aa).

N116 and T166 together coordinate substrate. K168 (proton acceptor) is an active-site residue. K170 contacts substrate. Mg(2+) is bound by residues K194, D196, and E197. K194 bears the N6-carboxylysine mark. Catalysis depends on H287, which acts as the Proton acceptor. Residues R288, H320, and S372 each coordinate substrate.

This sequence belongs to the RuBisCO large chain family. Type I subfamily. In terms of assembly, heterohexadecamer of 8 large chains and 8 small chains. It depends on Mg(2+) as a cofactor.

It carries out the reaction 2 (2R)-3-phosphoglycerate + 2 H(+) = D-ribulose 1,5-bisphosphate + CO2 + H2O. The enzyme catalyses D-ribulose 1,5-bisphosphate + O2 = 2-phosphoglycolate + (2R)-3-phosphoglycerate + 2 H(+). RuBisCO catalyzes two reactions: the carboxylation of D-ribulose 1,5-bisphosphate, the primary event in carbon dioxide fixation, as well as the oxidative fragmentation of the pentose substrate. Both reactions occur simultaneously and in competition at the same active site. This chain is Ribulose bisphosphate carboxylase large chain, found in Cupriavidus metallidurans (strain ATCC 43123 / DSM 2839 / NBRC 102507 / CH34) (Ralstonia metallidurans).